A 427-amino-acid chain; its full sequence is Serine--tRNA ligase (427 aa).

229-231 (TAE) contributes to the L-serine binding site. 260 to 262 (RSE) is an ATP binding site. Residue Glu283 coordinates L-serine. 347–350 (EISS) lines the ATP pocket. Ser383 lines the L-serine pocket.

The protein belongs to the class-II aminoacyl-tRNA synthetase family. Type-1 seryl-tRNA synthetase subfamily. Homodimer. The tRNA molecule binds across the dimer.

The protein localises to the cytoplasm. The catalysed reaction is tRNA(Ser) + L-serine + ATP = L-seryl-tRNA(Ser) + AMP + diphosphate + H(+). The enzyme catalyses tRNA(Sec) + L-serine + ATP = L-seryl-tRNA(Sec) + AMP + diphosphate + H(+). It functions in the pathway aminoacyl-tRNA biosynthesis; selenocysteinyl-tRNA(Sec) biosynthesis; L-seryl-tRNA(Sec) from L-serine and tRNA(Sec): step 1/1. Functionally, catalyzes the attachment of serine to tRNA(Ser). Is also able to aminoacylate tRNA(Sec) with serine, to form the misacylated tRNA L-seryl-tRNA(Sec), which will be further converted into selenocysteinyl-tRNA(Sec). The sequence is that of Serine--tRNA ligase from Nitrosococcus oceani (strain ATCC 19707 / BCRC 17464 / JCM 30415 / NCIMB 11848 / C-107).